We begin with the raw amino-acid sequence, 300 residues long: Formyltetrahydrofolate deformylase (300 aa).

The ACT domain occupies 21–102; sequence RLLVSCPDQP…MTWSLTLASE (82 aa). Residue aspartate 244 is part of the active site.

This sequence belongs to the PurU family.

It catalyses the reaction (6R)-10-formyltetrahydrofolate + H2O = (6S)-5,6,7,8-tetrahydrofolate + formate + H(+). The protein operates within purine metabolism; IMP biosynthesis via de novo pathway; formate from 10-formyl-5,6,7,8-tetrahydrofolate: step 1/1. Functionally, catalyzes the hydrolysis of 10-formyltetrahydrofolate (formyl-FH4) to formate and tetrahydrofolate (FH4). This is Formyltetrahydrofolate deformylase from Bacillus subtilis (strain 168).